Consider the following 254-residue polypeptide: Leucyl/phenylalanyl-tRNA--protein transferase (254 aa).

This sequence belongs to the L/F-transferase family.

The protein localises to the cytoplasm. It catalyses the reaction N-terminal L-lysyl-[protein] + L-leucyl-tRNA(Leu) = N-terminal L-leucyl-L-lysyl-[protein] + tRNA(Leu) + H(+). It carries out the reaction N-terminal L-arginyl-[protein] + L-leucyl-tRNA(Leu) = N-terminal L-leucyl-L-arginyl-[protein] + tRNA(Leu) + H(+). The enzyme catalyses L-phenylalanyl-tRNA(Phe) + an N-terminal L-alpha-aminoacyl-[protein] = an N-terminal L-phenylalanyl-L-alpha-aminoacyl-[protein] + tRNA(Phe). Its function is as follows. Functions in the N-end rule pathway of protein degradation where it conjugates Leu, Phe and, less efficiently, Met from aminoacyl-tRNAs to the N-termini of proteins containing an N-terminal arginine or lysine. The chain is Leucyl/phenylalanyl-tRNA--protein transferase from Burkholderia cenocepacia (strain HI2424).